The sequence spans 138 residues: Cysteine desulfuration protein SufE (138 aa).

Cysteine 51 acts as the Cysteine persulfide intermediate in catalysis.

Belongs to the SufE family. In terms of assembly, homodimer. Interacts with SufS.

Its subcellular location is the cytoplasm. It functions in the pathway cofactor biosynthesis; iron-sulfur cluster biosynthesis. Functionally, participates in cysteine desulfuration mediated by SufS. Cysteine desulfuration mobilizes sulfur from L-cysteine to yield L-alanine and constitutes an essential step in sulfur metabolism for biosynthesis of a variety of sulfur-containing biomolecules. Functions as a sulfur acceptor for SufS, by mediating the direct transfer of the sulfur atom from the S-sulfanylcysteine of SufS, an intermediate product of cysteine desulfuration process. The protein is Cysteine desulfuration protein SufE of Klebsiella pneumoniae subsp. pneumoniae (strain ATCC 700721 / MGH 78578).